Consider the following 235-residue polypeptide: Ribonuclease PH (235 aa).

Phosphate is bound by residues Arg86 and 124 to 126 (GTR).

This sequence belongs to the RNase PH family. In terms of assembly, homohexameric ring arranged as a trimer of dimers.

The enzyme catalyses tRNA(n+1) + phosphate = tRNA(n) + a ribonucleoside 5'-diphosphate. In terms of biological role, phosphorolytic 3'-5' exoribonuclease that plays an important role in tRNA 3'-end maturation. Removes nucleotide residues following the 3'-CCA terminus of tRNAs; can also add nucleotides to the ends of RNA molecules by using nucleoside diphosphates as substrates, but this may not be physiologically important. Probably plays a role in initiation of 16S rRNA degradation (leading to ribosome degradation) during starvation. This Legionella pneumophila (strain Corby) protein is Ribonuclease PH.